The chain runs to 330 residues: Aspartate--ammonia ligase (330 aa).

Belongs to the class-II aminoacyl-tRNA synthetase family. AsnA subfamily.

The protein localises to the cytoplasm. The catalysed reaction is L-aspartate + NH4(+) + ATP = L-asparagine + AMP + diphosphate + H(+). The protein operates within amino-acid biosynthesis; L-asparagine biosynthesis; L-asparagine from L-aspartate (ammonia route): step 1/1. The polypeptide is Aspartate--ammonia ligase (Streptococcus pyogenes serotype M6 (strain ATCC BAA-946 / MGAS10394)).